Reading from the N-terminus, the 270-residue chain is NAD kinase (270 aa).

D61 (proton acceptor) is an active-site residue. Residues 61–62 (DG), 133–134 (NE), R144, R163, D165, and 176–181 (TAYNLS) each bind NAD(+).

Belongs to the NAD kinase family. Requires a divalent metal cation as cofactor.

It localises to the cytoplasm. The catalysed reaction is NAD(+) + ATP = ADP + NADP(+) + H(+). Functionally, involved in the regulation of the intracellular balance of NAD and NADP, and is a key enzyme in the biosynthesis of NADP. Catalyzes specifically the phosphorylation on 2'-hydroxyl of the adenosine moiety of NAD to yield NADP. This Natronomonas pharaonis (strain ATCC 35678 / DSM 2160 / CIP 103997 / JCM 8858 / NBRC 14720 / NCIMB 2260 / Gabara) (Halobacterium pharaonis) protein is NAD kinase.